The primary structure comprises 338 residues: 1-aminocyclopropane-1-carboxylate deaminase (338 aa).

Lys51 bears the N6-(pyridoxal phosphate)lysine mark. The active-site Nucleophile is Ser78.

Belongs to the ACC deaminase/D-cysteine desulfhydrase family. Homotrimer. It depends on pyridoxal 5'-phosphate as a cofactor.

It carries out the reaction 1-aminocyclopropane-1-carboxylate + H2O = 2-oxobutanoate + NH4(+). Functionally, catalyzes a cyclopropane ring-opening reaction, the irreversible conversion of 1-aminocyclopropane-1-carboxylate (ACC) to ammonia and alpha-ketobutyrate. Allows growth on ACC as a nitrogen source. This chain is 1-aminocyclopropane-1-carboxylate deaminase, found in Burkholderia pseudomallei (strain 1106a).